Consider the following 380-residue polypeptide: Cytochrome b (380 aa).

4 helical membrane passes run 34-54, 78-99, 114-134, and 179-199; these read FGSLLGICLTTQILTGLLLAM, WLIRNIHANGASFFFICIYLHI, WNTGILLLLTLMATAFVGYVL, and FFALHFLLPFMIAGLTLIHLT. Heme b-binding residues include histidine 84 and histidine 98. 2 residues coordinate heme b: histidine 183 and histidine 197. Histidine 202 is a binding site for a ubiquinone. Transmembrane regions (helical) follow at residues 227–247, 289–309, 321–341, and 348–368; these read LKDTLGFMLMLLPLTTLALFS, LGGVLALAASVLILFLSPLLH, LSQLLFWILIANLFILTWVGS, and FIIIGQLASLTYFTILLILLP.

This sequence belongs to the cytochrome b family. The cytochrome bc1 complex contains 11 subunits: 3 respiratory subunits (MT-CYB, CYC1 and UQCRFS1), 2 core proteins (UQCRC1 and UQCRC2) and 6 low-molecular weight proteins (UQCRH/QCR6, UQCRB/QCR7, UQCRQ/QCR8, UQCR10/QCR9, UQCR11/QCR10 and a cleavage product of UQCRFS1). This cytochrome bc1 complex then forms a dimer. Requires heme b as cofactor.

The protein resides in the mitochondrion inner membrane. Component of the ubiquinol-cytochrome c reductase complex (complex III or cytochrome b-c1 complex) that is part of the mitochondrial respiratory chain. The b-c1 complex mediates electron transfer from ubiquinol to cytochrome c. Contributes to the generation of a proton gradient across the mitochondrial membrane that is then used for ATP synthesis. In Fregetta tropica (Black-bellied storm-petrel), this protein is Cytochrome b (MT-CYB).